The following is a 1529-amino-acid chain: DNA (cytosine-5)-methyltransferase 1B (1529 aa).

Disordered stretches follow at residues 1-56 (MVKS…RAAC) and 674-706 (DDEL…TRSR). The span at 21–35 (QKKDEDTTDKGKLDE) shows a compositional bias: basic and acidic residues. Over residues 674–694 (DDELEENEDEDAEEEAQIEEE) the composition is skewed to acidic residues. Positions 697–706 (SKTPPSTRSR) are enriched in polar residues. BAH domains lie at 741–873 (LRIN…FSLP) and 910–1049 (ITYN…KQLP). One can recognise an SAM-dependent MTase C5-type domain in the interval 1093–1527 (LATLDIFAGC…RKLKEAVDAK (435 aa)). Residue Cys1198 is part of the active site.

The protein belongs to the class I-like SAM-binding methyltransferase superfamily. C5-methyltransferase family. In terms of tissue distribution, expressed in roots and inflorescences. Expressed in roots, panicles, anthers, pistils, endosperm and imbibed embryos. Expressed in tissues containing actively replicating and dividing cells, such as shoot and root meristems.

It is found in the nucleus. The enzyme catalyses a 2'-deoxycytidine in DNA + S-adenosyl-L-methionine = a 5-methyl-2'-deoxycytidine in DNA + S-adenosyl-L-homocysteine + H(+). Major CG methylase that methylates chromatin CpG residues and maintains DNA methylation. Plays a major role in genomic imprinting, regulation of embryogenesis and seed viability. Maintains DNA methylation at the FIE1 gene locus in the embryo. This is DNA (cytosine-5)-methyltransferase 1B (MET1B) from Oryza sativa subsp. japonica (Rice).